Reading from the N-terminus, the 742-residue chain is Pyriculol/pyriculariol biosynthesis cluster transcription factor 1 (742 aa).

A DNA-binding region (zn(2)-C6 fungal-type) is located at residues 23-49 (CVLCQHRKIKCDRSFPCANCQRANVQC). The segment at 85–116 (GKPDIARLTTKRSSLSQSPPKGEEPLPEWNRH) is disordered. Basic and acidic residues predominate over residues 105 to 116 (KGEEPLPEWNRH).

It localises to the nucleus. Transcriptional regulator; part of the gene cluster that mediates the biosynthesis of pyriculol and pyriculariol, two heptaketides that induce lesion formation upon application on rice leaves but are dispensable for pathogenicity. With TRF2, negatively regulates the expression of the gene cluster and the subsequent pyriculol and pyriculariol production. The sequence is that of Pyriculol/pyriculariol biosynthesis cluster transcription factor 1 from Pyricularia oryzae (strain 70-15 / ATCC MYA-4617 / FGSC 8958) (Rice blast fungus).